We begin with the raw amino-acid sequence, 467 residues long: ATP synthase subunit beta (467 aa).

Residue 157–164 (GGAGVGKT) coordinates ATP.

It belongs to the ATPase alpha/beta chains family. F-type ATPases have 2 components, CF(1) - the catalytic core - and CF(0) - the membrane proton channel. CF(1) has five subunits: alpha(3), beta(3), gamma(1), delta(1), epsilon(1). CF(0) has three main subunits: a(1), b(2) and c(9-12). The alpha and beta chains form an alternating ring which encloses part of the gamma chain. CF(1) is attached to CF(0) by a central stalk formed by the gamma and epsilon chains, while a peripheral stalk is formed by the delta and b chains.

It localises to the cell inner membrane. It carries out the reaction ATP + H2O + 4 H(+)(in) = ADP + phosphate + 5 H(+)(out). In terms of biological role, produces ATP from ADP in the presence of a proton gradient across the membrane. The catalytic sites are hosted primarily by the beta subunits. This is ATP synthase subunit beta from Desulfosudis oleivorans (strain DSM 6200 / JCM 39069 / Hxd3) (Desulfococcus oleovorans).